We begin with the raw amino-acid sequence, 372 residues long: DSC E3 ubiquitin ligase complex subunit 2 (372 aa).

5 consecutive transmembrane segments (helical) span residues 26–46 (VVAG…LHLL), 54–74 (ILLW…LFII), 95–115 (YMFI…SLLF), 126–146 (TFLI…TVFV), and 160–180 (VIPM…NAFL). The segment at 246-314 (TENENQVENP…LPTGPASQLY (69 aa)) is disordered. Over residues 249-268 (ENQVENPVSNADANDSPTRQ) the composition is skewed to polar residues. Ser-264 carries the post-translational modification Phosphoserine. Thr-266 bears the Phosphothreonine mark. Over residues 269-284 (NARATAIASSSNTAAS) the composition is skewed to low complexity. Residues 286–305 (RNRQQISHPPLGRTSSSSVL) are compositionally biased toward polar residues. The region spanning 332-368 (EDINTVQTIMQTSRAQAIQALSQTNDVQRAVELLLEQ) is the UBA domain.

In terms of assembly, component of the DSC E3 ubiquitin ligase complex composed of dsc1, dsc2, dsc3 and dsc4.

Its subcellular location is the golgi apparatus membrane. It catalyses the reaction S-ubiquitinyl-[E2 ubiquitin-conjugating enzyme]-L-cysteine + [acceptor protein]-L-lysine = [E2 ubiquitin-conjugating enzyme]-L-cysteine + N(6)-ubiquitinyl-[acceptor protein]-L-lysine.. Its pathway is protein modification; protein ubiquitination. Component of the DSC E3 ubiquitin ligase complex which is required for the sre1 transcriptional activator proteolytic cleavage to release the soluble transcription factor from the membrane in low oxygen or sterol conditions. The complex also plays an important role in the multivesicular body (MVB) pathway and functions in a post-endoplasmic reticulum pathway for protein degradation. The polypeptide is DSC E3 ubiquitin ligase complex subunit 2 (dsc2) (Schizosaccharomyces pombe (strain 972 / ATCC 24843) (Fission yeast)).